The sequence spans 414 residues: Esterase FrsA (414 aa).

The protein belongs to the FrsA family.

It catalyses the reaction a carboxylic ester + H2O = an alcohol + a carboxylate + H(+). Catalyzes the hydrolysis of esters. In Klebsiella pneumoniae subsp. pneumoniae (strain ATCC 700721 / MGH 78578), this protein is Esterase FrsA.